The sequence spans 350 residues: MAAQIWYEDDGDLSVLDGKKVAIIGYGSQGHAHALNLRDSGVDVVVGLRPNSKSVEFAKEQGLEVKSVPEAAAEADVIMILAPDQYQKGIWENDIEPNIKPGAALAFAHGFNIHYGYIKPSEDHPVFMVAPKGPGHIVRREYVAGRGVPVVTAVEQDPRGDGWDLALAYAKALGALRAGAIKTTFKEETETDLFGEQNVLLGGVNKLVEMGFEVLTDAGYQPEIAYFEVCHELKMIVDLMNEGGLNKDRWSCSDTAQYGDYVSTVIDEHTRERMQYHLQRIQDGSFAKEFMDDQAAGAPKFKQLQEEYSNVRIEEVGPKLRAMFSWNNDAAKDADEANSFTGKIARAQVQ.

Residues 3-183 (AQIWYEDDGD…GALRAGAIKT (181 aa)) enclose the KARI N-terminal Rossmann domain. NADP(+)-binding positions include 26-29 (YGSQ), arginine 49, serine 52, serine 54, and 84-87 (DQYQ). Histidine 109 is an active-site residue. Glycine 135 contributes to the NADP(+) binding site. Positions 184–327 (TFKEETETDL…PKLRAMFSWN (144 aa)) constitute a KARI C-terminal knotted domain. Residues aspartate 192, glutamate 196, glutamate 228, and glutamate 232 each contribute to the Mg(2+) site. A substrate-binding site is contributed by serine 253.

The protein belongs to the ketol-acid reductoisomerase family. The cofactor is Mg(2+).

The enzyme catalyses (2R)-2,3-dihydroxy-3-methylbutanoate + NADP(+) = (2S)-2-acetolactate + NADPH + H(+). It carries out the reaction (2R,3R)-2,3-dihydroxy-3-methylpentanoate + NADP(+) = (S)-2-ethyl-2-hydroxy-3-oxobutanoate + NADPH + H(+). Its pathway is amino-acid biosynthesis; L-isoleucine biosynthesis; L-isoleucine from 2-oxobutanoate: step 2/4. It functions in the pathway amino-acid biosynthesis; L-valine biosynthesis; L-valine from pyruvate: step 2/4. In terms of biological role, involved in the biosynthesis of branched-chain amino acids (BCAA). Catalyzes an alkyl-migration followed by a ketol-acid reduction of (S)-2-acetolactate (S2AL) to yield (R)-2,3-dihydroxy-isovalerate. In the isomerase reaction, S2AL is rearranged via a Mg-dependent methyl migration to produce 3-hydroxy-3-methyl-2-ketobutyrate (HMKB). In the reductase reaction, this 2-ketoacid undergoes a metal-dependent reduction by NADPH to yield (R)-2,3-dihydroxy-isovalerate. In Bifidobacterium animalis subsp. lactis (strain AD011), this protein is Ketol-acid reductoisomerase (NADP(+)).